The chain runs to 428 residues: Oxysterol-binding protein 9 (428 aa).

Polar residues predominate over residues Met-1–Gly-11. Disordered regions lie at residues Met-1–Asn-32 and Ala-396–Lys-428. Residues Ser-18–Asn-32 show a composition bias toward low complexity. Residues Glu-389 to Glu-422 are a coiled coil.

Belongs to the OSBP family.

The protein is Oxysterol-binding protein 9 (osbI) of Dictyostelium discoideum (Social amoeba).